The sequence spans 370 residues: Protein RKD5 (370 aa).

Residues 193 to 232 are disordered; the sequence is DSETESEESVNEKTEHSEFENDKTEQSESDAKTEILKKKK. Basic and acidic residues predominate over residues 202–228; it reads VNEKTEHSEFENDKTEQSESDAKTEIL. Positions 224-309 constitute an RWP-RK domain; it reads KTEILKKKKR…AEKQQEKNEA (86 aa). A coiled-coil region spans residues 283–328; it reads HRKIKSLDCLIHDLQREAEKQQEKNEAAAMAVAKKQEKLETEKRNI. The segment at 347–370 is disordered; the sequence is NFKKRHRASRAKKNQESLVTSSST. A compositionally biased stretch (basic residues) spans 349 to 358; the sequence is KKRHRASRAK.

The protein localises to the nucleus. Putative transcription factor. In Arabidopsis thaliana (Mouse-ear cress), this protein is Protein RKD5 (RKD5).